Consider the following 351-residue polypeptide: N-acetyl-gamma-glutamyl-phosphate reductase (351 aa).

Residue C154 is part of the active site.

This sequence belongs to the NAGSA dehydrogenase family. Type 1 subfamily.

It localises to the cytoplasm. It carries out the reaction N-acetyl-L-glutamate 5-semialdehyde + phosphate + NADP(+) = N-acetyl-L-glutamyl 5-phosphate + NADPH + H(+). Its pathway is amino-acid biosynthesis; L-arginine biosynthesis; N(2)-acetyl-L-ornithine from L-glutamate: step 3/4. Catalyzes the NADPH-dependent reduction of N-acetyl-5-glutamyl phosphate to yield N-acetyl-L-glutamate 5-semialdehyde. In Prochlorococcus marinus (strain MIT 9312), this protein is N-acetyl-gamma-glutamyl-phosphate reductase.